A 257-amino-acid polypeptide reads, in one-letter code: tRNA pseudouridine synthase A (257 aa).

D53 serves as the catalytic Nucleophile. A substrate-binding site is contributed by Y111.

This sequence belongs to the tRNA pseudouridine synthase TruA family. As to quaternary structure, homodimer.

The catalysed reaction is uridine(38/39/40) in tRNA = pseudouridine(38/39/40) in tRNA. Its function is as follows. Formation of pseudouridine at positions 38, 39 and 40 in the anticodon stem and loop of transfer RNAs. In Xanthomonas campestris pv. campestris (strain 8004), this protein is tRNA pseudouridine synthase A.